The following is a 257-amino-acid chain: Tryptophan synthase alpha chain (257 aa).

Catalysis depends on proton acceptor residues Glu-51 and Asp-62.

It belongs to the TrpA family. Tetramer of two alpha and two beta chains.

It catalyses the reaction (1S,2R)-1-C-(indol-3-yl)glycerol 3-phosphate + L-serine = D-glyceraldehyde 3-phosphate + L-tryptophan + H2O. Its pathway is amino-acid biosynthesis; L-tryptophan biosynthesis; L-tryptophan from chorismate: step 5/5. Its function is as follows. The alpha subunit is responsible for the aldol cleavage of indoleglycerol phosphate to indole and glyceraldehyde 3-phosphate. This Nitratidesulfovibrio vulgaris (strain ATCC 29579 / DSM 644 / CCUG 34227 / NCIMB 8303 / VKM B-1760 / Hildenborough) (Desulfovibrio vulgaris) protein is Tryptophan synthase alpha chain.